The following is a 413-amino-acid chain: Argininosuccinate synthase (413 aa).

ATP-binding positions include 14 to 22 (AYSGGLDTS) and Ala41. 2 residues coordinate L-citrulline: Tyr94 and Ser99. Gly124 lines the ATP pocket. The L-aspartate site is built by Thr126, Asn130, and Asp131. L-citrulline is bound at residue Asn130. Positions 134, 185, 194, 270, and 282 each coordinate L-citrulline.

The protein belongs to the argininosuccinate synthase family. Type 1 subfamily. As to quaternary structure, homotetramer.

Its subcellular location is the cytoplasm. It carries out the reaction L-citrulline + L-aspartate + ATP = 2-(N(omega)-L-arginino)succinate + AMP + diphosphate + H(+). Its pathway is amino-acid biosynthesis; L-arginine biosynthesis; L-arginine from L-ornithine and carbamoyl phosphate: step 2/3. The chain is Argininosuccinate synthase from Hyphomonas neptunium (strain ATCC 15444).